The sequence spans 413 residues: Peptidase T (413 aa).

Residue H81 participates in Zn(2+) binding. D83 is an active-site residue. Residue D143 participates in Zn(2+) binding. The Proton acceptor role is filled by E178. Residues E179, D201, and H383 each coordinate Zn(2+).

This sequence belongs to the peptidase M20B family. Requires Zn(2+) as cofactor.

The protein localises to the cytoplasm. It carries out the reaction Release of the N-terminal residue from a tripeptide.. In terms of biological role, cleaves the N-terminal amino acid of tripeptides. The sequence is that of Peptidase T from Lactococcus lactis subsp. hordniae.